A 254-amino-acid polypeptide reads, in one-letter code: MYQPLLLLPLLLTSAFATPHDPTTHQALDKRASFPIPSSKGSVTYSSPKSVSGTFDGGLKTYGRGVKCSGQKEGGDKDAVFILEDGATLKNAIIGADQIEGVHCKGSCTIQNVWWTDVCEDALSLKGSGSGTHRIIGGGARNADDKVIQHNSGGKVTIQDFTVQNFGKLYRACGNCSKQFKRTVEISGVKASSGKSLVGINSNYGDTATISGCASSVKEICVEYEGTDNNDKEPKKKGSGPSNACKYKEPLSKC.

The first 17 residues, 1–17, serve as a signal peptide directing secretion; that stretch reads MYQPLLLLPLLLTSAFA. A glycan (N-linked (GlcNAc...) asparagine) is linked at asparagine 175. The interval 227–254 is disordered; the sequence is TDNNDKEPKKKGSGPSNACKYKEPLSKC.

This sequence belongs to the polysaccharide lyase 3 family. The cofactor is Ca(2+).

The protein resides in the secreted. The catalysed reaction is Eliminative cleavage of (1-&gt;4)-alpha-D-galacturonan to give oligosaccharides with 4-deoxy-alpha-D-galact-4-enuronosyl groups at their non-reducing ends.. Pectinolytic enzyme consist of four classes of enzymes: pectin lyase, polygalacturonase, pectin methylesterase and rhamnogalacturonase. Among pectinolytic enzymes, pectin lyase is the most important in depolymerization of pectin, since it cleaves internal glycosidic bonds of highly methylated pectins. Favors pectate, the anion, over pectin, the methyl ester. The polypeptide is Probable pectate lyase E (plyE) (Neosartorya fischeri (strain ATCC 1020 / DSM 3700 / CBS 544.65 / FGSC A1164 / JCM 1740 / NRRL 181 / WB 181) (Aspergillus fischerianus)).